A 230-amino-acid polypeptide reads, in one-letter code: Large ribosomal subunit protein uL1 (230 aa).

The protein belongs to the universal ribosomal protein uL1 family. As to quaternary structure, part of the 50S ribosomal subunit.

Its function is as follows. Binds directly to 23S rRNA. The L1 stalk is quite mobile in the ribosome, and is involved in E site tRNA release. In terms of biological role, protein L1 is also a translational repressor protein, it controls the translation of the L11 operon by binding to its mRNA. This chain is Large ribosomal subunit protein uL1, found in Rhodopseudomonas palustris (strain BisB18).